The chain runs to 55 residues: Ferredoxin (55 aa).

4Fe-4S ferredoxin-type domains lie at 2–27 (FVINDSCVSCGACAGECPVSAITQGD) and 28–55 (TQFVIDADTCIDCGNCANVCPVGAPNQE). Positions 8, 11, 14, 18, 37, 40, 43, and 47 each coordinate [4Fe-4S] cluster.

[4Fe-4S] cluster is required as a cofactor.

Functionally, ferredoxins are iron-sulfur proteins that transfer electrons in a wide variety of metabolic reactions. This Clostridium butyricum protein is Ferredoxin.